The primary structure comprises 173 residues: Ribosome maturation factor RimM (173 aa).

Residues 96–169 form the PRC barrel domain; it reads PDEFYDHQLE…LITIDPPDGL (74 aa).

Belongs to the RimM family. Binds ribosomal protein uS19.

Its subcellular location is the cytoplasm. Its function is as follows. An accessory protein needed during the final step in the assembly of 30S ribosomal subunit, possibly for assembly of the head region. Essential for efficient processing of 16S rRNA. May be needed both before and after RbfA during the maturation of 16S rRNA. It has affinity for free ribosomal 30S subunits but not for 70S ribosomes. This is Ribosome maturation factor RimM from Mycolicibacterium gilvum (strain PYR-GCK) (Mycobacterium gilvum (strain PYR-GCK)).